We begin with the raw amino-acid sequence, 235 residues long: 7-cyano-7-deazaguanine synthase (235 aa).

Position 12–22 (12–22 (FSGGQDSTTCL)) interacts with ATP. Positions 200, 215, 218, and 221 each coordinate Zn(2+).

It belongs to the QueC family. It depends on Zn(2+) as a cofactor.

The catalysed reaction is 7-carboxy-7-deazaguanine + NH4(+) + ATP = 7-cyano-7-deazaguanine + ADP + phosphate + H2O + H(+). The protein operates within purine metabolism; 7-cyano-7-deazaguanine biosynthesis. Its function is as follows. Catalyzes the ATP-dependent conversion of 7-carboxy-7-deazaguanine (CDG) to 7-cyano-7-deazaguanine (preQ(0)). This chain is 7-cyano-7-deazaguanine synthase, found in Leptothrix cholodnii (strain ATCC 51168 / LMG 8142 / SP-6) (Leptothrix discophora (strain SP-6)).